The following is a 68-amino-acid chain: Copper transport protein ATOX1 (68 aa).

The region spanning 1–63 (MPKHEFSVDM…TLNKTGKAVS (63 aa)) is the HMA domain. 2 residues coordinate Cu cation: C12 and C15. S47 is subject to Phosphoserine. An N6-acetyllysine modification is found at K60.

This sequence belongs to the ATX1 family. As to quaternary structure, homodimer. Interacts with ATP7B. Interacts with ATP7A. Interacts (via dimer form) with SLC31A1 (via C-terminal domain); this interaction improves ATOX1 stability and controls intracellular Cu(I) levels.

Functionally, binds and deliver cytosolic copper to the copper ATPase proteins. May be important in cellular antioxidant defense. The chain is Copper transport protein ATOX1 from Mus musculus (Mouse).